We begin with the raw amino-acid sequence, 312 residues long: Lipoyl synthase (312 aa).

Residues 1 to 10 show a composition bias toward basic and acidic residues; sequence MNEAPAEKQK. Residues 1 to 20 are disordered; it reads MNEAPAEKQKPQQGKRFSER. Positions 51, 56, 62, 77, 81, 84, and 290 each coordinate [4Fe-4S] cluster. Residues 63 to 280 enclose the Radical SAM core domain; the sequence is WSRKTATYLA…RSVGESLGLF (218 aa).

This sequence belongs to the radical SAM superfamily. Lipoyl synthase family. It depends on [4Fe-4S] cluster as a cofactor.

The protein resides in the cytoplasm. It carries out the reaction [[Fe-S] cluster scaffold protein carrying a second [4Fe-4S](2+) cluster] + N(6)-octanoyl-L-lysyl-[protein] + 2 oxidized [2Fe-2S]-[ferredoxin] + 2 S-adenosyl-L-methionine + 4 H(+) = [[Fe-S] cluster scaffold protein] + N(6)-[(R)-dihydrolipoyl]-L-lysyl-[protein] + 4 Fe(3+) + 2 hydrogen sulfide + 2 5'-deoxyadenosine + 2 L-methionine + 2 reduced [2Fe-2S]-[ferredoxin]. The protein operates within protein modification; protein lipoylation via endogenous pathway; protein N(6)-(lipoyl)lysine from octanoyl-[acyl-carrier-protein]: step 2/2. Functionally, catalyzes the radical-mediated insertion of two sulfur atoms into the C-6 and C-8 positions of the octanoyl moiety bound to the lipoyl domains of lipoate-dependent enzymes, thereby converting the octanoylated domains into lipoylated derivatives. This is Lipoyl synthase from Chlamydia felis (strain Fe/C-56) (Chlamydophila felis).